The following is a 318-amino-acid chain: Ubiquitin-like domain-containing CTD phosphatase 1 (318 aa).

The Ubiquitin-like domain occupies 3-81; that stretch reads LSLIIKWGGQ…IMMMGTREES (79 aa). The FCP1 homology domain maps to 133-294; the sequence is PREGKKLLVL…VKLSQYLKEI (162 aa). D143, D145, and D253 together coordinate Mg(2+).

Mg(2+) serves as cofactor.

Its subcellular location is the nucleus. It carries out the reaction O-phospho-L-seryl-[protein] + H2O = L-seryl-[protein] + phosphate. The enzyme catalyses O-phospho-L-threonyl-[protein] + H2O = L-threonyl-[protein] + phosphate. Dephosphorylates 26S nuclear proteasomes, thereby decreasing their proteolytic activity. Recruited to the 19S regulatory particle of the 26S proteasome where it dephosphorylates 19S component psmc2 which impairs psmc2 ATPase activity and disrupts 26S proteasome assembly. Has also been reported to stimulate the proteolytic activity of the 26S proteasome. In Xenopus laevis (African clawed frog), this protein is Ubiquitin-like domain-containing CTD phosphatase 1 (ublcp1).